The following is a 3149-amino-acid chain: Large tegument protein deneddylase (3149 aa).

Residues Met1 to Arg13 show a composition bias toward polar residues. The tract at residues Met1–Gly30 is disordered. The interval Met1–Leu268 is deubiquitination activity. The 218-residue stretch at Leu41–Phe258 folds into the Peptidase C76 domain. Active-site residues include Cys61, Asp193, and His195. The disordered stretch occupies residues Pro319 to Ala341. Tandem repeats lie at residues Pro335–Ala339, Pro340–Ala344, Pro345–Ala349, Pro350–Ala354, Pro355–Ala359, Pro360–Ala364, Pro365–Ala369, and Pro370–Ala374. Positions Pro335–Ala374 are 8 X 5 AA repeats of P-A-S-A-A. Disordered stretches follow at residues Phe382 to Leu656, Leu901 to Arg923, Ala1143 to Leu1166, Gly1412 to Glu1434, Pro1644 to Trp1677, Gly2583 to Val2839, Ala2852 to Arg2981, and Gln2995 to Asp3019. The span at Leu462–Ala483 shows a compositional bias: pro residues. Composition is skewed to low complexity over residues Ala509–Leu536 and Gln544–Pro564. Residues Ser554–Ala584 are interaction with inner tegument protein. Pro residues predominate over residues Ser565–Gln609. A compositionally biased stretch (low complexity) spans Ala1143 to Ala1155. Polar residues predominate over residues Ser2592–Leu2603. Residues Gln2711–Ser2720 show a composition bias toward pro residues. Polar residues-rich tracts occupy residues Ser2734–Ser2745 and Ser2784–Asp2804. Residues Met2812–Glu2827 show a composition bias toward basic and acidic residues. Positions Ala2874–Ala2885 are enriched in low complexity.

It belongs to the herpesviridae large tegument protein family. Interacts with host CUL1 and CUL4A; these interactions inhibit the E3 ligase activity of cullins. Interacts with inner tegument protein. Interacts with capsid vertex specific component CVC2. Interacts with the major capsid protein/MCP. Interacts with host TRIM25 and YWHAZ.

It localises to the virion tegument. The protein localises to the host cytoplasm. The protein resides in the host nucleus. It catalyses the reaction Thiol-dependent hydrolysis of ester, thioester, amide, peptide and isopeptide bonds formed by the C-terminal Gly of ubiquitin (a 76-residue protein attached to proteins as an intracellular targeting signal).. Its function is as follows. Large tegument protein that plays multiple roles in the viral cycle. During viral entry, remains associated with the capsid while most of the tegument is detached and participates in the capsid transport toward the host nucleus. Plays a role in the routing of the capsid at the nuclear pore complex and subsequent uncoating. Within the host nucleus, acts as a deneddylase and promotes the degradation of nuclear CRLs (cullin-RING ubiquitin ligases) and thereby stabilizes nuclear CRL substrates, while cytoplasmic CRLs remain unaffected. These modifications prevent host cell cycle S-phase progression and create a favorable environment allowing efficient viral genome replication. Participates later in the secondary envelopment of capsids. Indeed, plays a linker role for the association of the outer viral tegument to the capsids together with the inner tegument protein. Counteracts host TLR-mediated NF-kappa-B activation through both MYD88 and TICAM1-dependent pathways by interfering with 'Lys-63'- and 'Lys-48'-linked ubiquitination of signaling intermediates such as TRAF6 and IKBKG. Inhibits type I interferon production by forming a tri-molecular complex with host TRIM25 and 14-3-3 thereby promoting TRIM25 autoubiquitination and sequestration of the ligase into inactive protein aggregates. In turn, host RIGI is recruited to the complex but ubiquitination is severely impaired leading to inhibition of the pathway. Also catalyzes the removal of 'Lys-48'- and 'Lys-63'-linked ubiquitin chains on host TBK1 and STING1 suppressing cGAS-STING signaling in addition to the RIGI-MAVS pathway. Inhibits selective autophagy by deubiquitinating host SQSTM1. In turn, decreased SQSTM1 ubiquitination fails to recruit LC3 to SQSTM1-positive aggregates. In the host nucleus, deubiquitinates topoisomerase II subunits TOP2A and TOP2B thereby stabilizing SUMOylated TOP2 which halts the DNA damage response to TOP2-induced double strand DNA breaks and promotes cell survival. This chain is Large tegument protein deneddylase, found in Epstein-Barr virus (strain B95-8) (HHV-4).